A 296-amino-acid chain; its full sequence is Coiled-coil domain-containing protein 69 (296 aa).

The span at 1–18 (MGCRHSRLSSCKPPKKKR) shows a compositional bias: basic residues. The tract at residues 1 to 41 (MGCRHSRLSSCKPPKKKRQEPEPEQPPRPEPHELGPLNGDT) is disordered. The N-myristoyl glycine moiety is linked to residue glycine 2. Basic and acidic residues predominate over residues 19-33 (QEPEPEQPPRPEPHE). Positions 48–272 (CASEEAERHQ…QEKEELLYRV (225 aa)) form a coiled coil. A phosphoserine mark is found at serine 154 and serine 241.

It belongs to the CCDC69 family. As to expression, highly expressed in duodenum, esophagus, pancreas, prostate, salivary gland, thymus and urinary bladder.

The protein localises to the cytoplasm. It localises to the cytoskeleton. Its subcellular location is the spindle. It is found in the midbody. In terms of biological role, may act as a scaffold to regulate the recruitment and assembly of spindle midzone components. Required for the localization of AURKB and PLK1 to the spindle midzone. The polypeptide is Coiled-coil domain-containing protein 69 (Homo sapiens (Human)).